The primary structure comprises 142 residues: Succinate dehydrogenase assembly factor 2, mitochondrial (142 aa).

It belongs to the SDHAF2 family. Interacts with the flavoprotein subunit within the SDH catalytic dimer.

The protein resides in the mitochondrion matrix. Its function is as follows. Plays an essential role in the assembly of succinate dehydrogenase (SDH), an enzyme complex (also referred to as respiratory complex II) that is a component of both the tricarboxylic acid (TCA) cycle and the mitochondrial electron transport chain, and which couples the oxidation of succinate to fumarate with the reduction of ubiquinone (coenzyme Q) to ubiquinol. Required for flavinylation (covalent attachment of FAD) of the flavoprotein subunit of the SDH catalytic dimer. The chain is Succinate dehydrogenase assembly factor 2, mitochondrial from Debaryomyces hansenii (strain ATCC 36239 / CBS 767 / BCRC 21394 / JCM 1990 / NBRC 0083 / IGC 2968) (Yeast).